The sequence spans 367 residues: Glutamate 5-kinase (367 aa).

An ATP-binding site is contributed by Lys10. Residues Ser50, Asp137, and Asn149 each coordinate substrate. ATP-binding positions include 169 to 170 (TD) and 211 to 217 (TGGMSTK). The region spanning 275-353 (AGEITVDEGA…QQIDAILGYE (79 aa)) is the PUA domain.

The protein belongs to the glutamate 5-kinase family.

Its subcellular location is the cytoplasm. The enzyme catalyses L-glutamate + ATP = L-glutamyl 5-phosphate + ADP. It functions in the pathway amino-acid biosynthesis; L-proline biosynthesis; L-glutamate 5-semialdehyde from L-glutamate: step 1/2. Catalyzes the transfer of a phosphate group to glutamate to form L-glutamate 5-phosphate. The polypeptide is Glutamate 5-kinase (Salmonella arizonae (strain ATCC BAA-731 / CDC346-86 / RSK2980)).